A 456-amino-acid chain; its full sequence is Ammonium transporter Amt2 (456 aa).

A run of 11 helical transmembrane segments spans residues 18–38 (LVWVLTVTFLIFFMHAGFAML), 61–81 (IGVIVFFLLGAAVSAIVAGLT), 109–129 (WLFGAVFAMTAATIVSGAVAG), 141–161 (ILIAGVIYPVVVGVTWAGGFL), 170–190 (AGGMIVHGMGGIAGLTAAWII), 211–231 (ITFAVLGTLILAFGWYGFNVG), 255–275 (VALVTTLGMAAGALGAGGVAF), 281–301 (VDTLYVANGVLAGLVGITAIA), 304–324 (IVWPGALVVGLLAGAQLPIVF), 339–359 (VFPVHGSAGVLGTLLYPVFAV), and 377–397 (VGVGVIAVWTFVATTAIFGGF).

The protein belongs to the ammonia transporter channel (TC 1.A.11.2) family. As to quaternary structure, homotrimer. Interacts with both GlnK1 and GlnK2 after ammonium shock.

The protein resides in the cell membrane. In terms of biological role, involved in the uptake of ammonium/ammonia (NH(4)(+)/NH(3)). Transport is electrogenic. The polypeptide is Ammonium transporter Amt2 (Haloferax mediterranei (strain ATCC 33500 / DSM 1411 / JCM 8866 / NBRC 14739 / NCIMB 2177 / R-4) (Halobacterium mediterranei)).